Here is a 62-residue protein sequence, read N- to C-terminus: uncharacterized protein (62 aa).

This is an uncharacterized protein from Schizosaccharomyces pombe (strain 972 / ATCC 24843) (Fission yeast).